A 384-amino-acid chain; its full sequence is MPEFEVTPWEVTGVVDYNKLIEEFGTTPLTDDLLKKTEELTKKELPMYFKRKFFFSHRDYDLVLKDYEAGKGFFLYTGRGPSGPMHIGHIIPFFATKWLQENFGVNLYVQITDDEKFLFKPQLTFEGTKRWAYENILDIIAVGFDPDKTFIFQDSEFTKIYEMAIPIAKKVTYSMAKAVFGFNEQSKIGMIFFPAIQAAPTFFEEKRSLIPAAIDQDPYWRIQRDFAESLGYYKTAALHSKFVPGLMGLGGKMSASKPETAIYLTDDPEEAGKKIWKYALTGGRATAKEQRELGGEPDKCVVFKWLEIFFEPDEKKLLERYIACKNGEILCGQCKRYLIEKVQNFLKEHQEKREKAKKEIEKFKYTGDLAREQWDKAIPEPLRK.

Residues proline 81–histidine 89 carry the 'HIGH' region motif. Positions lysine 252 to serine 256 match the 'KMSKS' region motif.

It belongs to the class-I aminoacyl-tRNA synthetase family.

Its subcellular location is the cytoplasm. The enzyme catalyses tRNA(Trp) + L-tryptophan + ATP = L-tryptophyl-tRNA(Trp) + AMP + diphosphate + H(+). In Thermococcus sibiricus (strain DSM 12597 / MM 739), this protein is Tryptophan--tRNA ligase.